Here is a 400-residue protein sequence, read N- to C-terminus: Elongation factor Tu (400 aa).

The tr-type G domain occupies 10–208 (KPHVNVGTIG…AMDNYIPDPQ (199 aa)). The tract at residues 19 to 26 (GHIDHGKS) is G1. Position 19–26 (19–26 (GHIDHGKS)) interacts with GTP. S26 provides a ligand contact to Mg(2+). Positions 60–64 (GITIN) are G2. Positions 81–84 (DCPG) are G3. GTP-binding positions include 81–85 (DCPGH) and 136–139 (NKTD). The interval 136-139 (NKTD) is G4. The interval 174 to 176 (SAL) is G5.

The protein belongs to the TRAFAC class translation factor GTPase superfamily. Classic translation factor GTPase family. EF-Tu/EF-1A subfamily. In terms of assembly, monomer.

The protein localises to the cytoplasm. It catalyses the reaction GTP + H2O = GDP + phosphate + H(+). Functionally, GTP hydrolase that promotes the GTP-dependent binding of aminoacyl-tRNA to the A-site of ribosomes during protein biosynthesis. This Thermotoga maritima (strain ATCC 43589 / DSM 3109 / JCM 10099 / NBRC 100826 / MSB8) protein is Elongation factor Tu.